A 488-amino-acid chain; its full sequence is Glutamyl-tRNA(Gln) amidotransferase subunit B, mitochondrial (488 aa).

Belongs to the GatB/GatE family. GatB subfamily. Subunit of the heterotrimeric GatFAB amidotransferase (AdT) complex, composed of A, B and F subunits.

It is found in the mitochondrion. It catalyses the reaction L-glutamyl-tRNA(Gln) + L-glutamine + ATP + H2O = L-glutaminyl-tRNA(Gln) + L-glutamate + ADP + phosphate + H(+). Allows the formation of correctly charged Gln-tRNA(Gln) through the transamidation of misacylated Glu-tRNA(Gln) in the mitochondria. The reaction takes place in the presence of glutamine and ATP through an activated gamma-phospho-Glu-tRNA(Gln). This Candida albicans (strain SC5314 / ATCC MYA-2876) (Yeast) protein is Glutamyl-tRNA(Gln) amidotransferase subunit B, mitochondrial.